Consider the following 303-residue polypeptide: UDP-3-O-acyl-N-acetylglucosamine deacetylase (303 aa).

Residues His-78, His-237, and Asp-241 each contribute to the Zn(2+) site. The active-site Proton donor is His-264.

Belongs to the LpxC family. Requires Zn(2+) as cofactor.

The enzyme catalyses a UDP-3-O-[(3R)-3-hydroxyacyl]-N-acetyl-alpha-D-glucosamine + H2O = a UDP-3-O-[(3R)-3-hydroxyacyl]-alpha-D-glucosamine + acetate. The protein operates within glycolipid biosynthesis; lipid IV(A) biosynthesis; lipid IV(A) from (3R)-3-hydroxytetradecanoyl-[acyl-carrier-protein] and UDP-N-acetyl-alpha-D-glucosamine: step 2/6. Functionally, catalyzes the hydrolysis of UDP-3-O-myristoyl-N-acetylglucosamine to form UDP-3-O-myristoylglucosamine and acetate, the committed step in lipid A biosynthesis. This chain is UDP-3-O-acyl-N-acetylglucosamine deacetylase, found in Azotobacter vinelandii (strain DJ / ATCC BAA-1303).